The primary structure comprises 163 residues: NADH-quinone oxidoreductase subunit I (163 aa).

4Fe-4S ferredoxin-type domains are found at residues 53-83 (LRRY…IEAG) and 94-123 (VRYD…EGPN). Residues C63, C66, C69, C73, C103, C106, C109, and C113 each coordinate [4Fe-4S] cluster.

Belongs to the complex I 23 kDa subunit family. As to quaternary structure, NDH-1 is composed of 14 different subunits. Subunits NuoA, H, J, K, L, M, N constitute the membrane sector of the complex. The cofactor is [4Fe-4S] cluster.

It is found in the cell inner membrane. It catalyses the reaction a quinone + NADH + 5 H(+)(in) = a quinol + NAD(+) + 4 H(+)(out). Functionally, NDH-1 shuttles electrons from NADH, via FMN and iron-sulfur (Fe-S) centers, to quinones in the respiratory chain. The immediate electron acceptor for the enzyme in this species is believed to be ubiquinone. Couples the redox reaction to proton translocation (for every two electrons transferred, four hydrogen ions are translocated across the cytoplasmic membrane), and thus conserves the redox energy in a proton gradient. The sequence is that of NADH-quinone oxidoreductase subunit I from Brucella abortus (strain S19).